A 144-amino-acid polypeptide reads, in one-letter code: Nucleoside diphosphate kinase (144 aa).

ATP is bound by residues Lys9, Phe57, Arg85, Thr91, Arg102, and Asn112. Catalysis depends on His115, which acts as the Pros-phosphohistidine intermediate.

This sequence belongs to the NDK family. As to quaternary structure, homotetramer. Requires Mg(2+) as cofactor.

It localises to the cytoplasm. It carries out the reaction a 2'-deoxyribonucleoside 5'-diphosphate + ATP = a 2'-deoxyribonucleoside 5'-triphosphate + ADP. The enzyme catalyses a ribonucleoside 5'-diphosphate + ATP = a ribonucleoside 5'-triphosphate + ADP. Its function is as follows. Major role in the synthesis of nucleoside triphosphates other than ATP. The ATP gamma phosphate is transferred to the NDP beta phosphate via a ping-pong mechanism, using a phosphorylated active-site intermediate. In Chlamydia pneumoniae (Chlamydophila pneumoniae), this protein is Nucleoside diphosphate kinase.